The primary structure comprises 260 residues: MFDIGVNLTSPQFARDHDAVVARAFAAGLSGMLLTGTSLHESEQALALAQRHARCWSTAGVHPHDSSRWTRETEQRIRTLAQAPEVVAIGECGLDFNRNFSTPQAQEAAFSAQLALAAECGMPVFLHCRDAHERFMALLTPWLDKLPGAVLHCFTGTRDELQDCLRHGLYIGITGWVCDERRGLALRDMLPLIPANRLMVETDAPYLLPRDMTPKPGSRRNEPAYLAHIMARIAHWRGEDAQWLSGETDNNVRTLFGVAM.

3 residues coordinate a divalent metal cation: glutamate 91, histidine 127, and histidine 152.

Belongs to the metallo-dependent hydrolases superfamily. TatD-type hydrolase family. TatD subfamily. In terms of assembly, monomer. Mg(2+) is required as a cofactor.

It is found in the cytoplasm. Its function is as follows. 3'-5' exonuclease that prefers single-stranded DNA and RNA. May play a role in the H(2)O(2)-induced DNA damage repair. The polypeptide is 3'-5' ssDNA/RNA exonuclease TatD (Enterobacter lignolyticus (strain SCF1)).